Reading from the N-terminus, the 129-residue chain is uncharacterized protein (129 aa).

The segment covering 1 to 13 has biased composition (low complexity); that stretch reads MSDVAETVVAQEP. Positions 1 to 129 are disordered; sequence MSDVAETVVA…SGDAPAVAAE (129 aa). Residues 34-94 are compositionally biased toward basic and acidic residues; sequence IDEKTSEQNG…KRVSSAHEEA (61 aa). Residues 117 to 129 are compositionally biased toward low complexity; sequence VAASGDAPAVAAE.

This is an uncharacterized protein from Caenorhabditis elegans.